Reading from the N-terminus, the 380-residue chain is Erythronate-4-phosphate dehydrogenase (380 aa).

Ser45 and Thr66 together coordinate substrate. Residues 126 to 127, Asp146, Thr174, 205 to 207, and Asp231 contribute to the NAD(+) site; these read QV and ASR. Residue Arg207 is part of the active site. The active site involves Glu236. His253 functions as the Proton donor in the catalytic mechanism. Gly256 contributes to the NAD(+) binding site. Residue Tyr257 coordinates substrate.

It belongs to the D-isomer specific 2-hydroxyacid dehydrogenase family. PdxB subfamily. In terms of assembly, homodimer.

It is found in the cytoplasm. It catalyses the reaction 4-phospho-D-erythronate + NAD(+) = (R)-3-hydroxy-2-oxo-4-phosphooxybutanoate + NADH + H(+). The protein operates within cofactor biosynthesis; pyridoxine 5'-phosphate biosynthesis; pyridoxine 5'-phosphate from D-erythrose 4-phosphate: step 2/5. Functionally, catalyzes the oxidation of erythronate-4-phosphate to 3-hydroxy-2-oxo-4-phosphonooxybutanoate. This is Erythronate-4-phosphate dehydrogenase from Pseudomonas savastanoi pv. phaseolicola (strain 1448A / Race 6) (Pseudomonas syringae pv. phaseolicola (strain 1448A / Race 6)).